A 300-amino-acid chain; its full sequence is Protoheme IX farnesyltransferase 1 (300 aa).

The next 8 membrane-spanning stretches (helical) occupy residues 28–48, 50–70, 106–126, 150–170, 176–196, 222–242, 243–263, and 280–300; these read VVAL…PGAV, VQPL…AAAY, AMAI…TAWL, IVVG…AITG, ALLL…ALAI, CIML…LVGM, CGPL…YKAW, and FSIY…YLWS.

This sequence belongs to the UbiA prenyltransferase family. Protoheme IX farnesyltransferase subfamily.

It is found in the cell inner membrane. It catalyses the reaction heme b + (2E,6E)-farnesyl diphosphate + H2O = Fe(II)-heme o + diphosphate. It functions in the pathway porphyrin-containing compound metabolism; heme O biosynthesis; heme O from protoheme: step 1/1. Its function is as follows. Converts heme B (protoheme IX) to heme O by substitution of the vinyl group on carbon 2 of heme B porphyrin ring with a hydroxyethyl farnesyl side group. This chain is Protoheme IX farnesyltransferase 1, found in Shewanella loihica (strain ATCC BAA-1088 / PV-4).